Here is a 515-residue protein sequence, read N- to C-terminus: WUSCHEL-related homeobox 12 (515 aa).

2 stretches are compositionally biased toward polar residues: residues 23-32 and 44-57; these read QQQPDMNGNG and TAAT…SLLS. 3 disordered regions span residues 23-76, 130-156, and 176-195; these read QQQP…WNPR, NKLR…PPST, and LLAA…GSSK. The span at 62–71 shows a compositional bias: basic and acidic residues; sequence EGTRNPEPKP. A DNA-binding region (homeobox; WUS-type) is located at residues 68–132; the sequence is EPKPRWNPRP…NRKSRTKNKL (65 aa). The span at 130–143 shows a compositional bias: basic residues; sequence NKLRAAGHHHHHGR. Composition is skewed to low complexity over residues 144 to 156 and 177 to 195; these read AAAL…PPST and LAAT…GSSK.

This sequence belongs to the WUS homeobox family.

Its subcellular location is the nucleus. Transcription factor which may be involved in developmental processes. This is WUSCHEL-related homeobox 12 (WOX12) from Oryza sativa subsp. japonica (Rice).